We begin with the raw amino-acid sequence, 305 residues long: ATP synthase gamma chain (305 aa).

It belongs to the ATPase gamma chain family. As to quaternary structure, F-type ATPases have 2 components, CF(1) - the catalytic core - and CF(0) - the membrane proton channel. CF(1) has five subunits: alpha(3), beta(3), gamma(1), delta(1), epsilon(1). CF(0) has three main subunits: a, b and c.

It localises to the cell membrane. Its function is as follows. Produces ATP from ADP in the presence of a proton gradient across the membrane. The gamma chain is believed to be important in regulating ATPase activity and the flow of protons through the CF(0) complex. The protein is ATP synthase gamma chain of Streptomyces griseus subsp. griseus (strain JCM 4626 / CBS 651.72 / NBRC 13350 / KCC S-0626 / ISP 5235).